The primary structure comprises 300 residues: Protoheme IX farnesyltransferase (300 aa).

9 consecutive transmembrane segments (helical) span residues 24–44 (VTQLAVFCAVIGMFLATPGMV), 48–68 (VLLGGTIGIGLLAGSAFAINC), 94–114 (LQILAFSTVLGGLGAWTLYTF), 118–138 (LTIWLTIATFVGYAVIYTLLL), 146–166 (IVIGGASGAMPPALGWAAVTG), 172–192 (AWILVLIIFVWTPPHFWVLAL), 217–237 (LHILLYTVILFAVTMMPFISG), 239–259 (SGAVYLTSAVLLGALFLAYAW), and 278–298 (IVYLSLLFAALLVDHYARPVI).

It belongs to the UbiA prenyltransferase family. Protoheme IX farnesyltransferase subfamily.

Its subcellular location is the cell inner membrane. The catalysed reaction is heme b + (2E,6E)-farnesyl diphosphate + H2O = Fe(II)-heme o + diphosphate. Its pathway is porphyrin-containing compound metabolism; heme O biosynthesis; heme O from protoheme: step 1/1. In terms of biological role, converts heme B (protoheme IX) to heme O by substitution of the vinyl group on carbon 2 of heme B porphyrin ring with a hydroxyethyl farnesyl side group. The protein is Protoheme IX farnesyltransferase of Burkholderia mallei (strain NCTC 10247).